A 299-amino-acid chain; its full sequence is tRNA pseudouridine synthase B (299 aa).

The active-site Nucleophile is Asp-47.

It belongs to the pseudouridine synthase TruB family. Type 1 subfamily.

The catalysed reaction is uridine(55) in tRNA = pseudouridine(55) in tRNA. Responsible for synthesis of pseudouridine from uracil-55 in the psi GC loop of transfer RNAs. The sequence is that of tRNA pseudouridine synthase B from Dechloromonas aromatica (strain RCB).